Reading from the N-terminus, the 773-residue chain is LON peptidase N-terminal domain and RING finger protein 1 (773 aa).

The interval M1 to E29 is disordered. A TPR 1 repeat occupies W48 to A81. The segment at C123–R159 adopts an RING-type 1 zinc-finger fold. TPR repeat units lie at residues A212–D244, I246–W278, and P279–F312. Polar residues predominate over residues E359–K370. Residues E359–N388 form a disordered region. S431 bears the Phosphoserine mark. The RING-type 2 zinc-finger motif lies at C479 to K517. In terms of domain architecture, Lon N-terminal spans T558–S768.

This Homo sapiens (Human) protein is LON peptidase N-terminal domain and RING finger protein 1 (LONRF1).